We begin with the raw amino-acid sequence, 317 residues long: Methionyl-tRNA formyltransferase (317 aa).

A (6S)-5,6,7,8-tetrahydrofolate-binding site is contributed by 112–115 (SLLP).

The protein belongs to the Fmt family.

The enzyme catalyses L-methionyl-tRNA(fMet) + (6R)-10-formyltetrahydrofolate = N-formyl-L-methionyl-tRNA(fMet) + (6S)-5,6,7,8-tetrahydrofolate + H(+). Attaches a formyl group to the free amino group of methionyl-tRNA(fMet). The formyl group appears to play a dual role in the initiator identity of N-formylmethionyl-tRNA by promoting its recognition by IF2 and preventing the misappropriation of this tRNA by the elongation apparatus. The protein is Methionyl-tRNA formyltransferase of Mycoplasma capricolum subsp. capricolum (strain California kid / ATCC 27343 / NCTC 10154).